The primary structure comprises 204 residues: Casparian strip membrane protein 2 (204 aa).

The Cytoplasmic portion of the chain corresponds to methionine 1–arginine 41. The chain crosses the membrane as a helical span at residues glycine 42–alanine 62. Residues glycine 63–glutamine 92 are Extracellular-facing. Residues phenylalanine 93–valine 113 traverse the membrane as a helical segment. At valine 114 to arginine 125 the chain is on the cytoplasmic side. Residues leucine 126 to alanine 146 traverse the membrane as a helical segment. Topologically, residues alanine 147–glycine 178 are extracellular. Residues alanine 179 to valine 199 form a helical membrane-spanning segment. Residues alanine 200–histidine 204 are Cytoplasmic-facing.

The protein belongs to the Casparian strip membrane proteins (CASP) family. In terms of assembly, homodimer and heterodimers.

The protein resides in the cell membrane. Its function is as follows. Regulates membrane-cell wall junctions and localized cell wall deposition. Required for establishment of the Casparian strip membrane domain (CSD) and the subsequent formation of Casparian strips, a cell wall modification of the root endodermis that determines an apoplastic barrier between the intraorganismal apoplasm and the extraorganismal apoplasm and prevents lateral diffusion. The sequence is that of Casparian strip membrane protein 2 from Raphanus sativus (Radish).